Consider the following 393-residue polypeptide: Phosphoglycerate kinase (393 aa).

Substrate is bound by residues 21–23 (DMN), R36, 59–62 (HLGR), R114, and R147. ATP is bound by residues K198, E320, and 346-349 (GGDT).

The protein belongs to the phosphoglycerate kinase family. As to quaternary structure, monomer.

The protein resides in the cytoplasm. The catalysed reaction is (2R)-3-phosphoglycerate + ATP = (2R)-3-phospho-glyceroyl phosphate + ADP. It participates in carbohydrate degradation; glycolysis; pyruvate from D-glyceraldehyde 3-phosphate: step 2/5. In Thiobacillus denitrificans (strain ATCC 25259 / T1), this protein is Phosphoglycerate kinase.